The following is a 183-amino-acid chain: MGLETVIKDIMSAAQTEVNVINADADAEVSQILDDARQTAKKIMGDRLAKAEDDIKRLRQQEISSANLEVKRAMLNARKEVLDKVYNNAIDSIVSLPGSKQEELLKAIIDENDSNGSNIYSNKDSEKLVRKLSSLEYAGNIDCIGGLTIENSDGTVRLDYTYDMILKNVNEQSLKQTSDILFG.

The protein belongs to the V-ATPase E subunit family. Has multiple subunits with at least A(3), B(3), C, D, E, F, H, I and proteolipid K(x).

It is found in the cell membrane. Its function is as follows. Component of the A-type ATP synthase that produces ATP from ADP in the presence of a proton gradient across the membrane. This chain is A-type ATP synthase subunit E, found in Methanococcoides burtonii (strain DSM 6242 / NBRC 107633 / OCM 468 / ACE-M).